The sequence spans 436 residues: Kynureninase (436 aa).

Pyridoxal 5'-phosphate-binding positions include leucine 88, threonine 89, 116–119, aspartate 202, histidine 205, and tyrosine 227; that span reads FPSD. Residue lysine 228 is modified to N6-(pyridoxal phosphate)lysine. Pyridoxal 5'-phosphate-binding residues include tryptophan 280 and asparagine 308.

This sequence belongs to the kynureninase family. In terms of assembly, homodimer. Pyridoxal 5'-phosphate is required as a cofactor.

It localises to the cytoplasm. The enzyme catalyses L-kynurenine + H2O = anthranilate + L-alanine + H(+). The catalysed reaction is 3-hydroxy-L-kynurenine + H2O = 3-hydroxyanthranilate + L-alanine + H(+). The protein operates within amino-acid degradation; L-kynurenine degradation; L-alanine and anthranilate from L-kynurenine: step 1/1. It participates in cofactor biosynthesis; NAD(+) biosynthesis; quinolinate from L-kynurenine: step 2/3. Catalyzes the cleavage of L-kynurenine (L-Kyn) and L-3-hydroxykynurenine (L-3OHKyn) into anthranilic acid (AA) and 3-hydroxyanthranilic acid (3-OHAA), respectively. In Schistosoma japonicum (Blood fluke), this protein is Kynureninase.